Consider the following 425-residue polypeptide: GTPase Obg (425 aa).

The 158-residue stretch at 1–158 (MFIDKAKIYV…REIILELKLL (158 aa)) folds into the Obg domain. The OBG-type G domain maps to 159–331 (ADVGLVGFPN…LMAEVSKTLA (173 aa)). Residues 165 to 172 (GFPNVGKS), 190 to 194 (FTTLK), 212 to 215 (DIPG), 282 to 285 (NKSD), and 312 to 314 (SAA) contribute to the GTP site. Mg(2+)-binding residues include Ser-172 and Thr-192. Residues 345–425 (LFIPEEKRFT…LNDFEFEFVI (81 aa)) form the OCT domain.

Belongs to the TRAFAC class OBG-HflX-like GTPase superfamily. OBG GTPase family. Monomer. The cofactor is Mg(2+).

The protein localises to the cytoplasm. Its function is as follows. An essential GTPase which binds GTP, GDP and possibly (p)ppGpp with moderate affinity, with high nucleotide exchange rates and a fairly low GTP hydrolysis rate. Plays a role in control of the cell cycle, stress response, ribosome biogenesis and in those bacteria that undergo differentiation, in morphogenesis control. In Clostridium tetani (strain Massachusetts / E88), this protein is GTPase Obg.